The following is a 430-amino-acid chain: 26S protease regulatory subunit 6A (430 aa).

218–225 (GPPGTGKT) provides a ligand contact to ATP.

The protein belongs to the AAA ATPase family. In terms of assembly, component of the 19S proteasome regulatory particle complex. The 26S proteasome consists of a 20S core particle (CP) and two 19S regulatory subunits (RP). The regulatory particle is made of a lid composed of 9 subunits, a base containing 6 ATPases including the PSMC3 homolog rpt-5 and few additional components.

The protein resides in the cytoplasm. The protein localises to the nucleus. Its function is as follows. Component of the 26S proteasome, a multiprotein complex involved in the ATP-dependent degradation of ubiquitinated proteins. This complex plays a key role in the maintenance of protein homeostasis by removing misfolded or damaged proteins, which could impair cellular functions, and by removing proteins whose functions are no longer required. Therefore, the proteasome participates in numerous cellular processes, including cell cycle progression, apoptosis, or DNA damage repair. Belongs to the heterohexameric ring of AAA (ATPases associated with diverse cellular activities) proteins that unfolds ubiquitinated target proteins that are concurrently translocated into a proteolytic chamber and degraded into peptides. The chain is 26S protease regulatory subunit 6A from Caenorhabditis elegans.